Reading from the N-terminus, the 229-residue chain is Platelet-activating factor acetylhydrolase IB subunit alpha2 (229 aa).

Ser-2 bears the N-acetylserine mark. A Phosphoserine modification is found at Ser-2. Ser-48 is a catalytic residue. Phosphoserine is present on Ser-64. Catalysis depends on residues Asp-193 and His-196. Thr-220 carries the post-translational modification Phosphothreonine.

This sequence belongs to the 'GDSL' lipolytic enzyme family. Platelet-activating factor acetylhydrolase IB beta/gamma subunits subfamily. Forms a catalytic dimer which is either homodimer (alpha2/alpha2 homodimer) or heterodimer with PAFAH1B3 (alpha2/alpha1 heterodimer). Component of the cytosolic (PAF-AH (I)) heterotetrameric enzyme, which is composed of PAFAH1B1 (beta), PAFAH1B2 (alpha2) and PAFAH1B3 (alpha1) subunits. The catalytic activity of the enzyme resides in the alpha1 (PAFAH1B3) and alpha2 (PAFAH1B2) subunits, whereas the beta subunit (PAFAH1B1) has regulatory activity. Trimer formation is not essential for the catalytic activity. Interacts (homodimer form) with PAFAH1B1 (homodimer form); PAFAH1B2 competes with NDEL1 for PAFAH1B1 binding. Interacts with VLDLR; this interaction may modulate the Reelin pathway.

It is found in the cytoplasm. The enzyme catalyses a 1-O-alkyl-2-acetyl-sn-glycero-3-phosphocholine + H2O = a 1-O-alkyl-sn-glycero-3-phosphocholine + acetate + H(+). It catalyses the reaction 1-O-hexadecyl-2-acetyl-sn-glycero-3-phosphocholine + H2O = 1-O-hexadecyl-sn-glycero-3-phosphocholine + acetate + H(+). It carries out the reaction 1-O-hexadecyl-2-acetyl-sn-glycero-3-phosphate + H2O = 1-O-hexadecyl-sn-glycero-3-phosphate + acetate + H(+). The catalysed reaction is 1-O-hexadecyl-2-acetyl-sn-glycero-3-phosphoethanolamine + H2O = 1-O-hexadecyl-sn-glycero-3-phosphoethanolamine + acetate + H(+). Its activity is regulated as follows. Beta subunit (PAFAH1B1) stimulates the acetylhydrolase activity of the alpha2/alpha2 catalytic homodimer. Its function is as follows. Alpha2 catalytic subunit of the cytosolic type I platelet-activating factor (PAF) acetylhydrolase (PAF-AH (I)) heterotetrameric enzyme that catalyzes the hydrolyze of the acetyl group at the sn-2 position of PAF and its analogs and modulates the action of PAF. The activity and substrate specificity of PAF-AH (I) are affected by its subunit composition. The alpha2/alpha2 homodimer (PAFAH1B2/PAFAH1B2 homodimer) hydrolyzes PAF and 1-O-alkyl-2-acetyl-sn-glycero-3-phosphorylethanolamine (AAGPE) more efficiently than 1-O-alkyl-2-acetyl-sn-glycero-3-phosphoric acid (AAGPA). In contrast, the alpha1/alpha2 heterodimer(PAFAH1B3/PAFAH1B3 heterodimer) hydrolyzes AAGPA more efficiently than PAF, but has little hydrolytic activity towards AAGPE. May play a role in male germ cell meiosis during the late pachytenestage and meiotic divisions as well as early spermiogenesis. This is Platelet-activating factor acetylhydrolase IB subunit alpha2 from Pongo abelii (Sumatran orangutan).